Consider the following 207-residue polypeptide: Ion-translocating oxidoreductase complex subunit G (207 aa).

The chain crosses the membrane as a helical span at residues 11–31 (GILLGFIALLCTIISAGIYFL). The residue at position 175 (T175) is an FMN phosphoryl threonine.

It belongs to the RnfG family. As to quaternary structure, the complex is composed of six subunits: RnfA, RnfB, RnfC, RnfD, RnfE and RnfG. The cofactor is FMN.

The protein localises to the cell inner membrane. In terms of biological role, part of a membrane-bound complex that couples electron transfer with translocation of ions across the membrane. This is Ion-translocating oxidoreductase complex subunit G from Haemophilus influenzae (strain PittEE).